Here is a 143-residue protein sequence, read N- to C-terminus: Large ribosomal subunit protein uL16 (143 aa).

It belongs to the universal ribosomal protein uL16 family. In terms of assembly, part of the 50S ribosomal subunit.

Binds 23S rRNA and is also seen to make contacts with the A and possibly P site tRNAs. This chain is Large ribosomal subunit protein uL16, found in Oenococcus oeni (strain ATCC BAA-331 / PSU-1).